The primary structure comprises 428 residues: MCDVVLGSQWGDEGKGKLVDLLCDDIDVCARCQGGNNAGHTIVVGKVKYDFHMLPSGLVNPKCQNLVGSGVVIHVPSFFAELENLEAKGLDCRDRLFVSSRAHLVFDFHQRTDKLKEAELSTNKKSIGTTGKGIGPTYSTKASRSGIRVHHLVNPDPEAWEEFKTRYLRLVESRQKRYGEFEYDPKEELARFEKYRETLRPFVVDSVNFMHEAIAANKKILVEGANALMLDIDFGTYPYVTSSSTGIGGVLTGLGIPPRTIRNVYGVVKAYTTRVGEGPFPTEQLNKVGETLQDVGAEYGVTTGRKRRCGWLDLVVLKYSNSINGYTSLNITKLDVLDKFKEIEVGVAYKLNGKELPSFPEDLIDLAKVEVVYKKFPGWEQDITGIKKYEDLPENAKNYLKFIEDYLQVPIQWVGTGPARDSMLEKKI.

GTP-binding positions include 11–17 and 39–41; these read GDEGKGK and GHT. Aspartate 12 serves as the catalytic Proton acceptor. The Mg(2+) site is built by aspartate 12 and glycine 39. IMP contacts are provided by residues 12 to 15, 37 to 40, threonine 130, arginine 144, asparagine 226, threonine 241, and arginine 305; these read DEGK and NAGH. Residue histidine 40 is the Proton donor of the active site. Substrate is bound at residue 301-307; that stretch reads VTTGRKR. GTP-binding positions include arginine 307, 333-335, and 415-417; these read KLD and GTG.

The protein belongs to the adenylosuccinate synthetase family. In terms of assembly, homodimer. Mg(2+) is required as a cofactor.

The protein localises to the cytoplasm. The catalysed reaction is IMP + L-aspartate + GTP = N(6)-(1,2-dicarboxyethyl)-AMP + GDP + phosphate + 2 H(+). It functions in the pathway purine metabolism; AMP biosynthesis via de novo pathway; AMP from IMP: step 1/2. Its function is as follows. Plays an important role in the de novo pathway and in the salvage pathway of purine nucleotide biosynthesis. Catalyzes the first committed step in the biosynthesis of AMP from IMP. This chain is Adenylosuccinate synthetase, found in Candida albicans (strain SC5314 / ATCC MYA-2876) (Yeast).